Here is a 278-residue protein sequence, read N- to C-terminus: Tumor necrosis factor receptor superfamily member 5 (278 aa).

An N-terminal signal peptide occupies residues Met-1–Pro-20. The Extracellular segment spans residues Glu-21–Ala-194. 4 TNFR-Cys repeats span residues Ser-25 to Leu-60, Pro-61 to Cys-103, Val-104 to Glu-144, and Pro-145 to Gly-187. 8 disulfide bridges follow: Cys-26/Cys-37, Cys-38/Cys-51, Cys-41/Cys-59, Cys-62/Cys-77, Cys-83/Cys-103, Cys-105/Cys-119, Cys-111/Cys-116, and Cys-125/Cys-143. N-linked (GlcNAc...) asparagine glycans are attached at residues Asn-153 and Asn-180. The chain crosses the membrane as a helical span at residues Leu-195–Ile-215. Residues Arg-216–Glu-278 are Cytoplasmic-facing.

In terms of assembly, monomer and homodimer. Interacts with TRAF1, TRAF2, TRAF3, TRAF5 and TRAF6. Interacts with TRAF6 and MAP3K8; the interaction is required for ERK activation.

Its subcellular location is the membrane. Receptor for TNFSF5/CD40LG. Transduces TRAF6- and MAP3K8-mediated signals that activate ERK in macrophages and B cells, leading to induction of immunoglobulin secretion. The chain is Tumor necrosis factor receptor superfamily member 5 (CD40) from Sus scrofa (Pig).